Here is a 118-residue protein sequence, read N- to C-terminus: Large ribosomal subunit protein bL20 (118 aa).

The protein belongs to the bacterial ribosomal protein bL20 family.

Its function is as follows. Binds directly to 23S ribosomal RNA and is necessary for the in vitro assembly process of the 50S ribosomal subunit. It is not involved in the protein synthesizing functions of that subunit. The protein is Large ribosomal subunit protein bL20 of Psychrobacter sp. (strain PRwf-1).